A 357-amino-acid polypeptide reads, in one-letter code: Crh-like protein 1 (357 aa).

Positions 1 to 17 (MMLPLLAVSAFASLGAA) are cleaved as a signal peptide. The region spanning 20–220 (YTSCNPTNSL…WAGGETDYDE (201 aa)) is the GH16 domain. N-linked (GlcNAc...) asparagine glycans are attached at residues asparagine 52 and asparagine 92. Residue glutamate 109 is the Nucleophile of the active site. Glutamate 113 serves as the catalytic Proton donor. Residue glutamate 113 coordinates chitin. Residue asparagine 131 is glycosylated (N-linked (GlcNAc...) asparagine). Chitin contacts are provided by lysine 193, tryptophan 197, and threonine 208. 2 N-linked (GlcNAc...) asparagine glycosylation sites follow: asparagine 242 and asparagine 257. A lipid anchor (GPI-anchor amidated glycine) is attached at glycine 326. The propeptide at 327-357 (SASAVFTGAAVTNLPSFFFTVFFALAIALAF) is removed in mature form. The helical transmembrane segment at 337-357 (VTNLPSFFFTVFFALAIALAF) threads the bilayer.

Belongs to the glycosyl hydrolase 16 family. CRH1 subfamily. Post-translationally, the GPI-like anchor contains a phosphoceramide lipid group. The anchor position has not been determined.

The protein localises to the cell membrane. Its subcellular location is the secreted. It localises to the cell wall. It catalyses the reaction Random endo-hydrolysis of N-acetyl-beta-D-glucosaminide (1-&gt;4)-beta-linkages in chitin and chitodextrins.. In terms of biological role, dual chitinase/transglycosylase that plays a role in cell wall architecture. Chitinase and transglycosylase activities are coupled. Required for the polysaccharide cross-linking at the septa and the cell wall. More specifically, transfers chitin to 1,6-beta-glucan in the cell wall. The polypeptide is Crh-like protein 1 (Aspergillus fumigatus (strain ATCC MYA-4609 / CBS 101355 / FGSC A1100 / Af293) (Neosartorya fumigata)).